A 66-amino-acid polypeptide reads, in one-letter code: Surface composition regulator (66 aa).

This sequence belongs to the GlgS family.

In terms of biological role, major determinant of cell surface composition. Negatively regulates motility, adhesion and synthesis of biofilm exopolysaccharides. The protein is Surface composition regulator of Escherichia coli O127:H6 (strain E2348/69 / EPEC).